Consider the following 319-residue polypeptide: Acetyl esterase (319 aa).

The Involved in the stabilization of the negatively charged intermediate by the formation of the oxyanion hole signature appears at 91–93 (HGG). Catalysis depends on residues Ser-165, Asp-262, and His-292.

The protein belongs to the 'GDXG' lipolytic enzyme family. As to quaternary structure, homodimer. Interacts with MalT and MelA.

Its subcellular location is the cytoplasm. In terms of biological role, displays esterase activity towards short chain fatty esters (acyl chain length of up to 8 carbons). Able to hydrolyze triacetylglycerol (triacetin) and tributyrylglycerol (tributyrin), but not trioleylglycerol (triolein) or cholesterol oleate. Negatively regulates MalT activity by antagonizing maltotriose binding. Inhibits MelA galactosidase activity. This chain is Acetyl esterase, found in Escherichia coli O9:H4 (strain HS).